The following is a 360-amino-acid chain: Photosystem II protein D1 (360 aa).

A run of 3 helical transmembrane segments spans residues 29–46, 118–133, and 142–156; these read YIGWFGCLMFPTLLTATS, HFLLGVASYMGREWEL, and WIFVAFSAPVAAASA. His-118 provides a ligand contact to chlorophyll a. Tyr-126 contacts pheophytin a. Positions 170 and 189 each coordinate [CaMn4O5] cluster. The helical transmembrane segment at 197–218 threads the bilayer; that stretch reads FHMAGVAGVFGGSLFSAMHGSL. A chlorophyll a-binding site is contributed by His-198. A quinone is bound by residues His-215 and 264–265; that span reads SF. A Fe cation-binding site is contributed by His-215. His-272 lines the Fe cation pocket. A helical membrane pass occupies residues 274 to 288; the sequence is FLAAWPVVGIWLTAM. His-332, Glu-333, Asp-342, and Ala-344 together coordinate [CaMn4O5] cluster. The propeptide occupies 345-360; the sequence is SGDVLPVALNAPAVNG.

The protein belongs to the reaction center PufL/M/PsbA/D family. PSII is composed of 1 copy each of membrane proteins PsbA, PsbB, PsbC, PsbD, PsbE, PsbF, PsbH, PsbI, PsbJ, PsbK, PsbL, PsbM, PsbT, PsbX, PsbY, PsbZ, Psb30/Ycf12, at least 3 peripheral proteins of the oxygen-evolving complex and a large number of cofactors. It forms dimeric complexes. The D1/D2 heterodimer binds P680, chlorophylls that are the primary electron donor of PSII, and subsequent electron acceptors. It shares a non-heme iron and each subunit binds pheophytin, quinone, additional chlorophylls, carotenoids and lipids. D1 provides most of the ligands for the Mn4-Ca-O5 cluster of the oxygen-evolving complex (OEC). There is also a Cl(-1) ion associated with D1 and D2, which is required for oxygen evolution. The PSII complex binds additional chlorophylls, carotenoids and specific lipids. serves as cofactor. Tyr-161 forms a radical intermediate that is referred to as redox-active TyrZ, YZ or Y-Z. In terms of processing, C-terminally processed by CTPA; processing is essential to allow assembly of the oxygen-evolving complex and thus photosynthetic growth.

It localises to the plastid. Its subcellular location is the chloroplast thylakoid membrane. The enzyme catalyses 2 a plastoquinone + 4 hnu + 2 H2O = 2 a plastoquinol + O2. Functionally, photosystem II (PSII) is a light-driven water:plastoquinone oxidoreductase that uses light energy to abstract electrons from H(2)O, generating O(2) and a proton gradient subsequently used for ATP formation. It consists of a core antenna complex that captures photons, and an electron transfer chain that converts photonic excitation into a charge separation. The D1/D2 (PsbA/PsbD) reaction center heterodimer binds P680, the primary electron donor of PSII as well as several subsequent electron acceptors. This Trieres chinensis (Marine centric diatom) protein is Photosystem II protein D1.